A 351-amino-acid chain; its full sequence is Phosphoribosylformylglycinamidine cyclo-ligase (351 aa).

This sequence belongs to the AIR synthase family.

The protein resides in the cytoplasm. It catalyses the reaction 2-formamido-N(1)-(5-O-phospho-beta-D-ribosyl)acetamidine + ATP = 5-amino-1-(5-phospho-beta-D-ribosyl)imidazole + ADP + phosphate + H(+). It functions in the pathway purine metabolism; IMP biosynthesis via de novo pathway; 5-amino-1-(5-phospho-D-ribosyl)imidazole from N(2)-formyl-N(1)-(5-phospho-D-ribosyl)glycinamide: step 2/2. The sequence is that of Phosphoribosylformylglycinamidine cyclo-ligase from Burkholderia pseudomallei (strain 1710b).